The sequence spans 791 residues: 1-phosphatidylinositol 4,5-bisphosphate phosphodiesterase delta-4 (791 aa).

Residues 16–124 (LLMQKGTMMR…WMQGLQLLVG (109 aa)) enclose the PH domain. Positions 26 to 53 (KVRSKSWKKLRFFRLQDDGMTVWHARQA) are substrate binding. 3 consecutive EF-hand domains span residues 134 to 169 (RLDQ…MNVE), 170 to 205 (MDQE…LTQR), and 207 to 237 (EVQE…EQKE). Ca(2+) contacts are provided by Asp-147, Asn-149, Asp-151, Arg-153, Glu-158, Asp-183, Ser-185, Ser-187, Thr-189, and Glu-194. Residues 213-243 (EKFSSDGQKLTLLEFVDFLQEEQKEGERASD) carry the GBA motif. The PI-PLC X-box domain maps to 290–435 (QDMTQPLNHY…LRGKILVKGK (146 aa)). His-305 is an active-site residue. Ca(2+) contacts are provided by Asn-306, Glu-335, and Asp-337. His-350 is an active-site residue. Ca(2+) is bound at residue Glu-384. 4 residues coordinate substrate: Lys-433, Lys-435, Ser-551, and Arg-578. The region spanning 522–638 (LSALVVYLKA…GYVLKPDFLR (117 aa)) is the PI-PLC Y-box domain. Residues 638–765 (RDAQSSFHPE…QGYRHIHLLS (128 aa)) form the C2 domain. 6 residues coordinate Ca(2+): Ile-679, Asp-681, Asn-705, Asp-734, Tyr-735, and Asp-736. The PDZ-binding signature appears at 760–763 (HIHL).

As to quaternary structure, interacts with GRIP1. Interacts (via GBA motif) with guanine nucleotide-binding protein G(i) alpha subunit GNAI3 (inactive GDP-bound form); low-affinity interaction. Ca(2+) serves as cofactor.

Its subcellular location is the membrane. The protein resides in the nucleus. It is found in the cytoplasm. The protein localises to the endoplasmic reticulum. The catalysed reaction is a 1,2-diacyl-sn-glycero-3-phospho-(1D-myo-inositol-4,5-bisphosphate) + H2O = 1D-myo-inositol 1,4,5-trisphosphate + a 1,2-diacyl-sn-glycerol + H(+). The enzyme catalyses a 1,2-diacyl-sn-glycero-3-phospho-(1D-myo-inositol) + H2O = 1D-myo-inositol 1-phosphate + a 1,2-diacyl-sn-glycerol + H(+). Hydrolyzes the phosphatidylinositol 4,5-bisphosphate (PIP2) to generate 2 second messenger molecules diacylglycerol (DAG) and inositol 1,4,5-trisphosphate (IP3). DAG mediates the activation of protein kinase C (PKC), while IP3 releases Ca(2+) from intracellular stores. Required for acrosome reaction in sperm during fertilization, probably by acting as an important enzyme for intracellular Ca(2+) mobilization in the zona pellucida-induced acrosome reaction. May play a role in cell growth. Modulates the liver regeneration in cooperation with nuclear PKC. Overexpression up-regulates the Erk signaling pathway and proliferation. In Bos taurus (Bovine), this protein is 1-phosphatidylinositol 4,5-bisphosphate phosphodiesterase delta-4 (PLCD4).